A 410-amino-acid chain; its full sequence is Peptidase T (410 aa).

Residue His79 coordinates Zn(2+). Asp81 is a catalytic residue. Asp142 is a binding site for Zn(2+). Glu176 (proton acceptor) is an active-site residue. Zn(2+) is bound by residues Glu177, Asp199, and His381.

Belongs to the peptidase M20B family. The cofactor is Zn(2+).

The protein resides in the cytoplasm. The enzyme catalyses Release of the N-terminal residue from a tripeptide.. Functionally, cleaves the N-terminal amino acid of tripeptides. This is Peptidase T from Brevibacillus brevis (strain 47 / JCM 6285 / NBRC 100599).